A 112-amino-acid chain; its full sequence is UPF0060 membrane protein CMS0846 (112 aa).

Helical transmembrane passes span 6–26 (VILF…IWQA), 32–52 (PFWW…IATL), 61–81 (ILAA…TVVD), and 87–107 (RWDV…MAAP).

The protein belongs to the UPF0060 family.

Its subcellular location is the cell membrane. This chain is UPF0060 membrane protein CMS0846, found in Clavibacter sepedonicus (Clavibacter michiganensis subsp. sepedonicus).